Here is a 347-residue protein sequence, read N- to C-terminus: Quinolinate synthase (347 aa).

Positions 47 and 68 each coordinate iminosuccinate. Cys113 serves as a coordination point for [4Fe-4S] cluster. Residues 139–141 and Ser156 contribute to the iminosuccinate site; that span reads YAN. Cys200 is a [4Fe-4S] cluster binding site. Iminosuccinate is bound by residues 226–228 and Thr243; that span reads HPE. Cys297 contributes to the [4Fe-4S] cluster binding site.

It belongs to the quinolinate synthase family. Type 1 subfamily. [4Fe-4S] cluster is required as a cofactor.

The protein localises to the cytoplasm. The catalysed reaction is iminosuccinate + dihydroxyacetone phosphate = quinolinate + phosphate + 2 H2O + H(+). It participates in cofactor biosynthesis; NAD(+) biosynthesis; quinolinate from iminoaspartate: step 1/1. Functionally, catalyzes the condensation of iminoaspartate with dihydroxyacetone phosphate to form quinolinate. The protein is Quinolinate synthase of Escherichia coli O45:K1 (strain S88 / ExPEC).